The sequence spans 90 residues: Protein RL8A (90 aa).

The helical transmembrane segment at Trp15–His34 threads the bilayer. Residues His55–Ser90 are disordered. Residues Ser62–Thr74 show a composition bias toward acidic residues. The span at Arg80–Ser90 shows a compositional bias: polar residues.

Its subcellular location is the host membrane. This Homo sapiens (Human) protein is Protein RL8A (RL8A).